Reading from the N-terminus, the 339-residue chain is Phenylalanine--tRNA ligase alpha subunit (339 aa).

Mg(2+) is bound at residue glutamate 254.

Belongs to the class-II aminoacyl-tRNA synthetase family. Phe-tRNA synthetase alpha subunit type 1 subfamily. As to quaternary structure, tetramer of two alpha and two beta subunits. Mg(2+) serves as cofactor.

The protein localises to the cytoplasm. It carries out the reaction tRNA(Phe) + L-phenylalanine + ATP = L-phenylalanyl-tRNA(Phe) + AMP + diphosphate + H(+). The sequence is that of Phenylalanine--tRNA ligase alpha subunit from Clostridium botulinum (strain Langeland / NCTC 10281 / Type F).